The following is a 326-amino-acid chain: Probable pectate lyase B (326 aa).

Residues 1-15 form the signal peptide; that stretch reads MRVTAILTLATIAIA. 3 residues coordinate Ca(2+): Asp-133, Asp-162, and Asp-166. Arg-219 is a catalytic residue.

The protein belongs to the polysaccharide lyase 1 family. Ca(2+) is required as a cofactor.

Its subcellular location is the secreted. The enzyme catalyses Eliminative cleavage of (1-&gt;4)-alpha-D-galacturonan to give oligosaccharides with 4-deoxy-alpha-D-galact-4-enuronosyl groups at their non-reducing ends.. Pectinolytic enzyme consist of four classes of enzymes: pectin lyase, polygalacturonase, pectin methylesterase and rhamnogalacturonase. Among pectinolytic enzymes, pectin lyase is the most important in depolymerization of pectin, since it cleaves internal glycosidic bonds of highly methylated pectins. Favors pectate, the anion, over pectin, the methyl ester. This chain is Probable pectate lyase B (plyB), found in Aspergillus flavus (strain ATCC 200026 / FGSC A1120 / IAM 13836 / NRRL 3357 / JCM 12722 / SRRC 167).